Consider the following 728-residue polypeptide: Catalase-peroxidase (728 aa).

The tryptophyl-tyrosyl-methioninium (Trp-Tyr) (with M-244) cross-link spans 91-218; that stretch reads WHSAGTYRTA…LAAVQMGLIY (128 aa). H92 serves as the catalytic Proton acceptor. Positions 218–244 form a cross-link, tryptophyl-tyrosyl-methioninium (Tyr-Met) (with W-91); it reads YVNPEGPDGNPDPVAAARDIRDTFARM. H259 is a heme b binding site.

This sequence belongs to the peroxidase family. Peroxidase/catalase subfamily. In terms of assembly, homodimer or homotetramer. It depends on heme b as a cofactor. Formation of the three residue Trp-Tyr-Met cross-link is important for the catalase, but not the peroxidase activity of the enzyme.

It carries out the reaction H2O2 + AH2 = A + 2 H2O. The catalysed reaction is 2 H2O2 = O2 + 2 H2O. In terms of biological role, bifunctional enzyme with both catalase and broad-spectrum peroxidase activity. This chain is Catalase-peroxidase, found in Burkholderia thailandensis (strain ATCC 700388 / DSM 13276 / CCUG 48851 / CIP 106301 / E264).